The sequence spans 261 residues: Ribonuclease PH (261 aa).

Residues arginine 87 and 125 to 127 contribute to the phosphate site; that span reads GTR.

The protein belongs to the RNase PH family. As to quaternary structure, homohexameric ring arranged as a trimer of dimers.

The enzyme catalyses tRNA(n+1) + phosphate = tRNA(n) + a ribonucleoside 5'-diphosphate. Functionally, phosphorolytic 3'-5' exoribonuclease that plays an important role in tRNA 3'-end maturation. Removes nucleotide residues following the 3'-CCA terminus of tRNAs; can also add nucleotides to the ends of RNA molecules by using nucleoside diphosphates as substrates, but this may not be physiologically important. Probably plays a role in initiation of 16S rRNA degradation (leading to ribosome degradation) during starvation. The sequence is that of Ribonuclease PH from Desulforudis audaxviator (strain MP104C).